The following is a 757-amino-acid chain: RNA-directed RNA polymerase catalytic subunit (757 aa).

The interval 52-82 (KGKWTTNTETGAPQLNPIDGPLPEDNEPSGY) is disordered. Positions 55 to 64 (WTTNTETGAP) are enriched in polar residues. 2 consecutive short sequence motifs (nuclear localization signal) follow at residues 187-195 (RKRRVRDNM) and 203-216 (RTIGKKKQRLNKKS). The segment at 249–256 (RGFVYFVE) is promoter-binding site. One can recognise a RdRp catalytic domain in the interval 286–483 (VRKMMTNSQD…GINMSKKKSY (198 aa)).

Belongs to the influenza viruses polymerase PB1 family. Influenza RNA polymerase is composed of three subunits: PB1, PB2 and PA. Interacts (via N-terminus) with PA (via C-terminus). Interacts (via C-terminus) with PB2 (via N-terminus); this interaction is essential for transcription initiation. Phosphorylated by host PRKCA.

The protein localises to the host nucleus. The protein resides in the host cytoplasm. It carries out the reaction RNA(n) + a ribonucleoside 5'-triphosphate = RNA(n+1) + diphosphate. Functionally, RNA-dependent RNA polymerase which is responsible for replication and transcription of virus RNA segments. The transcription of viral mRNAs occurs by a unique mechanism called cap-snatching. 5' methylated caps of cellular mRNAs are cleaved after 10-13 nucleotides by PA. In turn, these short capped RNAs are used as primers by PB1 for transcription of viral mRNAs. During virus replication, PB1 initiates RNA synthesis and copy vRNA into complementary RNA (cRNA) which in turn serves as a template for the production of more vRNAs. This Aves (Cat) protein is RNA-directed RNA polymerase catalytic subunit.